Consider the following 123-residue polypeptide: Small ribosomal subunit protein uS12 (123 aa).

Aspartate 89 is subject to 3-methylthioaspartic acid. The interval 100–123 (GSLDTSGVKDRKQGRSKYGAKRPK) is disordered. Residues 113–123 (GRSKYGAKRPK) show a composition bias toward basic residues.

This sequence belongs to the universal ribosomal protein uS12 family. In terms of assembly, part of the 30S ribosomal subunit. Contacts proteins S8 and S17. May interact with IF1 in the 30S initiation complex.

Its function is as follows. With S4 and S5 plays an important role in translational accuracy. Interacts with and stabilizes bases of the 16S rRNA that are involved in tRNA selection in the A site and with the mRNA backbone. Located at the interface of the 30S and 50S subunits, it traverses the body of the 30S subunit contacting proteins on the other side and probably holding the rRNA structure together. The combined cluster of proteins S8, S12 and S17 appears to hold together the shoulder and platform of the 30S subunit. The polypeptide is Small ribosomal subunit protein uS12 (Pseudomonas aeruginosa (strain LESB58)).